The following is a 449-amino-acid chain: Glucose-6-phosphate isomerase 1 (449 aa).

T38 bears the Phosphothreonine mark. The Proton donor role is filled by E290. Catalysis depends on residues H311 and K425.

It belongs to the GPI family. Homodimer.

The protein resides in the cytoplasm. The catalysed reaction is alpha-D-glucose 6-phosphate = beta-D-fructose 6-phosphate. Its pathway is carbohydrate biosynthesis; gluconeogenesis. It participates in carbohydrate degradation; glycolysis; D-glyceraldehyde 3-phosphate and glycerone phosphate from D-glucose: step 2/4. Functionally, catalyzes the reversible isomerization of glucose-6-phosphate to fructose-6-phosphate. This chain is Glucose-6-phosphate isomerase 1, found in Geobacillus stearothermophilus (Bacillus stearothermophilus).